The sequence spans 142 residues: MSFVDGSVIVAILNEEPGFEELEKRLSDADGKLCVSPLVRFEAVAALTRLRIIATKGKADRSDLIGEARELVDSFIQALSASEVTIDSHTGVRALDAMARYGKVAGHPAALNLGDCFAYAAAKESGLTLIYKGNDFSQTDLG.

A PINc domain is found at 3–140; the sequence is FVDGSVIVAI…YKGNDFSQTD (138 aa). Aspartate 5 and aspartate 115 together coordinate Mg(2+).

It belongs to the PINc/VapC protein family. Mg(2+) serves as cofactor.

Its function is as follows. Toxic component of a type II toxin-antitoxin (TA) system. An RNase. This Rhizobium meliloti (strain 1021) (Ensifer meliloti) protein is VapC ribonuclease R02377.